The sequence spans 458 residues: Monomethylamine methyltransferase MtmB1 (458 aa).

Pyl-202 is a non-standard amino acid (pyrrolysine).

Belongs to the monomethylamine methyltransferase family. Can form a complex with MtmC.

It carries out the reaction Co(I)-[methylamine-specific corrinoid protein] + methylamine + H(+) = methyl-Co(III)-[methylamine-specific corrinoid protein] + NH4(+). It functions in the pathway one-carbon metabolism; methanogenesis from methylamine. Catalyzes the transfer of the methyl group from monomethylamine to the corrinoid cofactor of MtmC. The polypeptide is Monomethylamine methyltransferase MtmB1 (mtmB1) (Methanosarcina acetivorans (strain ATCC 35395 / DSM 2834 / JCM 12185 / C2A)).